Here is a 179-residue protein sequence, read N- to C-terminus: uncharacterized protein (179 aa).

Residues 53-82 (SPEREDPESPTRGVDEVDGACSEPPTPRPE) are disordered. Residues 54–67 (PEREDPESPTRGVD) show a composition bias toward basic and acidic residues.

This is an uncharacterized protein from Ictaluridae (bullhead catfishes).